Here is a 308-residue protein sequence, read N- to C-terminus: HPr kinase/phosphorylase (308 aa).

Residues His136 and Lys157 contribute to the active site. Residue 151-158 (GESGIGKS) participates in ATP binding. Position 158 (Ser158) interacts with Mg(2+). Catalysis depends on Asp175, which acts as the Proton acceptor; for phosphorylation activity. Proton donor; for dephosphorylation activity. The interval 198–207 (IEVRGMGIID) is important for the catalytic mechanism of both phosphorylation and dephosphorylation. Glu199 contributes to the Mg(2+) binding site. Residue Arg240 is part of the active site. Residues 261–266 (PIRPGR) form an important for the catalytic mechanism of dephosphorylation region.

The protein belongs to the HPrK/P family. As to quaternary structure, homohexamer. It depends on Mg(2+) as a cofactor.

The catalysed reaction is [HPr protein]-L-serine + ATP = [HPr protein]-O-phospho-L-serine + ADP + H(+). It catalyses the reaction [HPr protein]-O-phospho-L-serine + phosphate + H(+) = [HPr protein]-L-serine + diphosphate. In terms of biological role, catalyzes the ATP- as well as the pyrophosphate-dependent phosphorylation of a specific serine residue in HPr, a phosphocarrier protein of the phosphoenolpyruvate-dependent sugar phosphotransferase system (PTS). HprK/P also catalyzes the pyrophosphate-producing, inorganic phosphate-dependent dephosphorylation (phosphorolysis) of seryl-phosphorylated HPr (P-Ser-HPr). The two antagonistic activities of HprK/P are regulated by several intracellular metabolites, which change their concentration in response to the absence or presence of rapidly metabolisable carbon sources (glucose, fructose, etc.) in the growth medium. Therefore, by controlling the phosphorylation state of HPr, HPrK/P is a sensor enzyme that plays a major role in the regulation of carbon metabolism and sugar transport: it mediates carbon catabolite repression (CCR), and regulates PTS-catalyzed carbohydrate uptake and inducer exclusion. The polypeptide is HPr kinase/phosphorylase (Clostridium kluyveri (strain NBRC 12016)).